The chain runs to 1012 residues: Ankyrin repeat- and BTB/POZ domain-containing protein 3-B (1012 aa).

Residues 160–180 (ILSWTISVNCIAASLSALSMY) traverse the membrane as a helical segment. 3 ANK repeats span residues 511–540 (QGMT…DINS), 557–586 (RQAT…NVEG), and 595–624 (YTET…DPMI). Residues 831 to 897 (SDVTFLVEGK…LYCGGTDALH (67 aa)) enclose the BTB domain.

The protein localises to the membrane. This chain is Ankyrin repeat- and BTB/POZ domain-containing protein 3-B (abtb3b), found in Danio rerio (Zebrafish).